Reading from the N-terminus, the 260-residue chain is NAD-capped RNA hydrolase NudC (260 aa).

Arg69 provides a ligand contact to substrate. Residues Cys98 and Cys101 each contribute to the Zn(2+) site. Substrate is bound at residue Glu111. Zn(2+) contacts are provided by Cys116 and Cys119. Tyr124 serves as a coordination point for substrate. Residues 125 to 248 form the Nudix hydrolase domain; that stretch reads PQIAPCIIVA…TVARRLIEDT (124 aa). Positions 158, 174, and 178 each coordinate a divalent metal cation. Residues 159 to 180 carry the Nudix box motif; the sequence is GFVEVGETLEQTVVREVMEESQ. 192-199 is a binding site for substrate; that stretch reads QPWPFPHS. Residue Glu219 participates in a divalent metal cation binding. Ala241 is a binding site for substrate.

This sequence belongs to the Nudix hydrolase family. NudC subfamily. In terms of assembly, homodimer. The cofactor is Mg(2+). Mn(2+) is required as a cofactor. Zn(2+) serves as cofactor.

The enzyme catalyses a 5'-end NAD(+)-phospho-ribonucleoside in mRNA + H2O = a 5'-end phospho-adenosine-phospho-ribonucleoside in mRNA + beta-nicotinamide D-ribonucleotide + 2 H(+). It carries out the reaction NAD(+) + H2O = beta-nicotinamide D-ribonucleotide + AMP + 2 H(+). It catalyses the reaction NADH + H2O = reduced beta-nicotinamide D-ribonucleotide + AMP + 2 H(+). Functionally, mRNA decapping enzyme that specifically removes the nicotinamide adenine dinucleotide (NAD) cap from a subset of mRNAs by hydrolyzing the diphosphate linkage to produce nicotinamide mononucleotide (NMN) and 5' monophosphate mRNA. The NAD-cap is present at the 5'-end of some mRNAs and stabilizes RNA against 5'-processing. Has preference for mRNAs with a 5'-end purine. Catalyzes the hydrolysis of a broad range of dinucleotide pyrophosphates. The protein is NAD-capped RNA hydrolase NudC of Pectobacterium carotovorum subsp. carotovorum (strain PC1).